The primary structure comprises 627 residues: Translation factor GUF1, mitochondrial (627 aa).

A mitochondrion-targeting transit peptide spans 1-16 (MSLAWSAGRAWSRQSY). The tr-type G domain occupies 40–221 (ERYRNFCIVA…AVIERIPHPV (182 aa)). Residues 49–56 (AHIDHGKS), 114–118 (DTPGH), and 168–171 (NKID) each bind GTP.

It belongs to the TRAFAC class translation factor GTPase superfamily. Classic translation factor GTPase family. LepA subfamily.

Its subcellular location is the mitochondrion inner membrane. It carries out the reaction GTP + H2O = GDP + phosphate + H(+). Promotes mitochondrial protein synthesis. May act as a fidelity factor of the translation reaction, by catalyzing a one-codon backward translocation of tRNAs on improperly translocated ribosomes. Binds to mitochondrial ribosomes in a GTP-dependent manner. In Fusarium vanettenii (strain ATCC MYA-4622 / CBS 123669 / FGSC 9596 / NRRL 45880 / 77-13-4) (Fusarium solani subsp. pisi), this protein is Translation factor GUF1, mitochondrial.